Reading from the N-terminus, the 58-residue chain is Photosystem II reaction center protein K (58 aa).

Residues 1 to 21 constitute a propeptide that is removed on maturation; that stretch reads MLAIFNIYLDNAFHLNGIILA. The helical transmembrane segment at 29-49 threads the bilayer; it reads IFDPIVDVMPIIPVFFFLLAF.

Belongs to the PsbK family. As to quaternary structure, PSII is composed of 1 copy each of membrane proteins PsbA, PsbB, PsbC, PsbD, PsbE, PsbF, PsbH, PsbI, PsbJ, PsbK, PsbL, PsbM, PsbT, PsbX, PsbY, PsbZ, Psb30/Ycf12, at least 3 peripheral proteins of the oxygen-evolving complex and a large number of cofactors. It forms dimeric complexes.

It is found in the plastid. Its subcellular location is the chloroplast thylakoid membrane. Functionally, one of the components of the core complex of photosystem II (PSII). PSII is a light-driven water:plastoquinone oxidoreductase that uses light energy to abstract electrons from H(2)O, generating O(2) and a proton gradient subsequently used for ATP formation. It consists of a core antenna complex that captures photons, and an electron transfer chain that converts photonic excitation into a charge separation. This chain is Photosystem II reaction center protein K, found in Physcomitrium patens (Spreading-leaved earth moss).